The sequence spans 476 residues: Calcitonin gene-related peptide type 1 receptor (476 aa).

A signal peptide spans 1 to 33; sequence METLQMGLLSRSALFKYIIIFLIMINTRGYVLA. The Extracellular segment spans residues 34–154; the sequence is SQEQEAKTSV…FTHEKVKTAL (121 aa). Cystine bridges form between cysteine 63–cysteine 89, cysteine 80–cysteine 120, and cysteine 103–cysteine 142. 3 N-linked (GlcNAc...) asparagine glycosylation sites follow: asparagine 81, asparagine 133, and asparagine 138. A helical transmembrane segment spans residues 155–179; the sequence is NLYYLTIIGHGLSIASLLISLGIFF. Residues 180–190 are Cytoplasmic-facing; sequence YFKNLSCQRIT. A helical membrane pass occupies residues 191–213; the sequence is LHKNLFFSFVCNSIITIISLSAV. The Extracellular segment spans residues 214-224; sequence ANNQALVATNP. A helical transmembrane segment spans residues 225 to 253; that stretch reads VICKISQFIHLYLMGCNYFWMLCEGIYLH. Residues 254-267 lie on the Cytoplasmic side of the membrane; that stretch reads TLIVVAVFAEKQHL. Residues 268–288 traverse the membrane as a helical segment; sequence MWYYLLGWGFPLIPACIHAVA. Topologically, residues 289-304 are extracellular; that stretch reads RSLYYNDNCWISSETH. Residues 305–329 traverse the membrane as a helical segment; sequence LLYIIHGPICAALLVNLFFLLNIVR. The Cytoplasmic segment spans residues 330-344; that stretch reads VLITKLKVTHQAESN. Residues 345–366 traverse the membrane as a helical segment; sequence LYMKAVRATLILVPLLGIEFVL. Residues 367–381 lie on the Extracellular side of the membrane; the sequence is FPWKPEGRIAEEIYD. The helical transmembrane segment at 382-402 threads the bilayer; sequence YVMHILMHYQGLLVATIFCFF. Topologically, residues 403 to 476 are cytoplasmic; it reads NGEVQAVLKR…VFFKTEKQYM (74 aa).

It belongs to the G-protein coupled receptor 2 family.

It localises to the cell membrane. In terms of biological role, may function as G protein-coupled receptor for calcitonin-gene-related peptides and adrenomedullin. Specificity may be modulated by accessory proteins. May activate cAMP-dependent pathway. The polypeptide is Calcitonin gene-related peptide type 1 receptor (calcrl) (Xenopus laevis (African clawed frog)).